A 195-amino-acid chain; its full sequence is Nucleoside triphosphate pyrophosphatase (195 aa).

The active-site Proton acceptor is the Asp70.

It belongs to the Maf family. The cofactor is a divalent metal cation.

It is found in the cytoplasm. It catalyses the reaction a ribonucleoside 5'-triphosphate + H2O = a ribonucleoside 5'-phosphate + diphosphate + H(+). The catalysed reaction is a 2'-deoxyribonucleoside 5'-triphosphate + H2O = a 2'-deoxyribonucleoside 5'-phosphate + diphosphate + H(+). Its function is as follows. Nucleoside triphosphate pyrophosphatase. May have a dual role in cell division arrest and in preventing the incorporation of modified nucleotides into cellular nucleic acids. The sequence is that of Nucleoside triphosphate pyrophosphatase from Cyanothece sp. (strain PCC 7425 / ATCC 29141).